A 302-amino-acid polypeptide reads, in one-letter code: Quinolinate synthase (302 aa).

The iminosuccinate site is built by histidine 24 and serine 41. A [4Fe-4S] cluster-binding site is contributed by cysteine 86. Residues 112-114 (YVN) and serine 129 contribute to the iminosuccinate site. Residue cysteine 173 coordinates [4Fe-4S] cluster. Residues 199 to 201 (HPE) and threonine 216 contribute to the iminosuccinate site. Cysteine 259 lines the [4Fe-4S] cluster pocket.

The protein belongs to the quinolinate synthase family. Type 2 subfamily. The cofactor is [4Fe-4S] cluster.

The protein resides in the cytoplasm. It catalyses the reaction iminosuccinate + dihydroxyacetone phosphate = quinolinate + phosphate + 2 H2O + H(+). It participates in cofactor biosynthesis; NAD(+) biosynthesis; quinolinate from iminoaspartate: step 1/1. In terms of biological role, catalyzes the condensation of iminoaspartate with dihydroxyacetone phosphate to form quinolinate. The sequence is that of Quinolinate synthase from Thermococcus onnurineus (strain NA1).